Here is an 85-residue protein sequence, read N- to C-terminus: MAKEELIEMHGLVDEVLPDSRFRVTLDNGHKLVAYTSGKMRKNHIRILAGDQVSLELSPYDLSKGRITFRHIAGRGPGPAPRQSR.

Positions 1-72 (MAKEELIEMH…SKGRITFRHI (72 aa)) constitute an S1-like domain.

Belongs to the IF-1 family. Component of the 30S ribosomal translation pre-initiation complex which assembles on the 30S ribosome in the order IF-2 and IF-3, IF-1 and N-formylmethionyl-tRNA(fMet); mRNA recruitment can occur at any time during PIC assembly.

The protein localises to the cytoplasm. In terms of biological role, one of the essential components for the initiation of protein synthesis. Stabilizes the binding of IF-2 and IF-3 on the 30S subunit to which N-formylmethionyl-tRNA(fMet) subsequently binds. Helps modulate mRNA selection, yielding the 30S pre-initiation complex (PIC). Upon addition of the 50S ribosomal subunit IF-1, IF-2 and IF-3 are released leaving the mature 70S translation initiation complex. The sequence is that of Translation initiation factor IF-1 from Polaromonas naphthalenivorans (strain CJ2).